The chain runs to 310 residues: UDP-N-acetylenolpyruvoylglucosamine reductase (310 aa).

Residues 35–203 (RAGGAAEALV…TRVRFALRKG (169 aa)) form the FAD-binding PCMH-type domain. The active site involves R183. S232 functions as the Proton donor in the catalytic mechanism. E302 is an active-site residue.

The protein belongs to the MurB family. The cofactor is FAD.

The protein localises to the cytoplasm. It carries out the reaction UDP-N-acetyl-alpha-D-muramate + NADP(+) = UDP-N-acetyl-3-O-(1-carboxyvinyl)-alpha-D-glucosamine + NADPH + H(+). It participates in cell wall biogenesis; peptidoglycan biosynthesis. Cell wall formation. This is UDP-N-acetylenolpyruvoylglucosamine reductase from Myxococcus xanthus (strain DK1622).